A 784-amino-acid chain; its full sequence is MHTRVLHVLEFDKVKEQLLEHVSSSLGKEKVEKLFPSSHFAEVTNWQEETDEAVAALRLRGHVPLGGIFDIRASLKRAKIGGTLSPHELLDIASTISASRQLKQFIESLHEEKEEFPHLAGYAEKLAALPEVQQAIERCIDDHGEVMDHASERLRSIRQQLRTTEARVREKLENIIRSQSAQKMLSDAIITIRNDRYVIPVKQEYRGVYGGIVHDQSASGATLFIEPQAVVELNNQLQEARVKEKREIERILTELTSIVAEHAEALLENVDILAQLDFIFAKAKYANKLKATKPVMNDRGYIRLLQARHPLIDQDVVVPNDIELGKDYTTIVITGPNTGGKTVTLKTIGLLTLMAQAGLFIPALDGSELAVFRSVYADIGDEQSIEQSLSTFSSHMVNIVDILRNVDHESLVLFDELGAGTDPQEGAALAIAILDEVHGRGARTVATTHYPELKAYGYNRDGVINASVEFDTETLRPTYKLLIGIPGRSNAFEISKRLGLDERIIERAKSHISAESNKVENMIASLEQSKKRAEEEEKKAKEARMEAEKLRSDWEQKWEELHEKRDEIIEEAKRKAADIVRASQQEAERIIRELRRMQKEKQAEIKEHELIEAKKRLEEAIPTLEKKKKERKKQTQHAFQPGDEVKVTSLNQKGYLVEKVSDDEWQVQLGILKMKINERDLEYIGSAPKTETKPLATVKGKDYHVGLELDLRGERYEDAIVRLEKYIDDALLAGYPRVSIIHGKGTGALRKGVQEFLKKHRSVKNFHFGEANEGGTGVTIVELK.

335 to 342 (GPNTGGKT) lines the ATP pocket. One can recognise a Smr domain in the interval 709–784 (LDLRGERYED…GTGVTIVELK (76 aa)).

Belongs to the DNA mismatch repair MutS family. MutS2 subfamily. Homodimer. Binds to stalled ribosomes, contacting rRNA.

In terms of biological role, endonuclease that is involved in the suppression of homologous recombination and thus may have a key role in the control of bacterial genetic diversity. Acts as a ribosome collision sensor, splitting the ribosome into its 2 subunits. Detects stalled/collided 70S ribosomes which it binds and splits by an ATP-hydrolysis driven conformational change. Acts upstream of the ribosome quality control system (RQC), a ribosome-associated complex that mediates the extraction of incompletely synthesized nascent chains from stalled ribosomes and their subsequent degradation. Probably generates substrates for RQC. This is Endonuclease MutS2 from Geobacillus sp. (strain WCH70).